Reading from the N-terminus, the 127-residue chain is Evasin-4 (127 aa).

The N-terminal stretch at 1–23 (MAFKYWFVFAAVLYARQWLSTKC) is a signal peptide. Disulfide bonds link Cys50–Cys69, Cys65–Cys112, Cys86–Cys117, and Cys107–Cys126. Residues Asn54, Asn64, Asn70, Asn77, Asn83, Asn106, and Asn114 are each glycosylated (N-linked (GlcNAc...) asparagine).

It belongs to the evasin C8 family. Monomer.

It localises to the secreted. Its function is as follows. Salivary chemokine-binding protein which has chemokine-neutralizing activity and binds to host chemokines CCL1, CCL3, CCL5, CCL7, CCL8, CCL11, CCL14, CCL15, CCL16, CCL17, CCL18, CCL19, CCL21, CCL22, CCL23, CCL24, CCL25 and CCL26 with nanomolar affinity. Binds to CCL3 and CCL5 with 1:1 stoichiometry. Although binding to CCL25 is observed, does not inhibit CCL25-induced chemotaxis. Has been shown to reduce cardiac injury and inflammation in mice through its anti-CCL5 activity. The chain is Evasin-4 from Rhipicephalus sanguineus (Brown dog tick).